Reading from the N-terminus, the 175-residue chain is UPF0178 protein GOX1710 (175 aa).

This sequence belongs to the UPF0178 family.

This is UPF0178 protein GOX1710 from Gluconobacter oxydans (strain 621H) (Gluconobacter suboxydans).